The chain runs to 345 residues: Phosphate acyltransferase (345 aa).

This sequence belongs to the PlsX family. As to quaternary structure, homodimer. Probably interacts with PlsY.

The protein resides in the cytoplasm. It carries out the reaction a fatty acyl-[ACP] + phosphate = an acyl phosphate + holo-[ACP]. It participates in lipid metabolism; phospholipid metabolism. Its function is as follows. Catalyzes the reversible formation of acyl-phosphate (acyl-PO(4)) from acyl-[acyl-carrier-protein] (acyl-ACP). This enzyme utilizes acyl-ACP as fatty acyl donor, but not acyl-CoA. The polypeptide is Phosphate acyltransferase (Proteus mirabilis (strain HI4320)).